Reading from the N-terminus, the 660-residue chain is Acyl-coenzyme A oxidase acox-1.3 (660 aa).

FAD contacts are provided by residues 146-149, 154-155, and Gly188; these read YAQT and GT. Substrate is bound by residues 282 to 285 and Arg292; that span reads KIGY. FAD-binding positions include Arg317 and 337 to 340; that span reads QQHR. Residues His339, Ser389, His393, and Gln401 each coordinate ATP. Substrate is bound at residue 430–431; the sequence is YE. Glu431 functions as the Proton acceptor in the catalytic mechanism. An FAD-binding site is contributed by Glu433. Residues 524-527 and Tyr572 each bind ATP; that span reads RASR. The Microbody targeting signal motif lies at 658 to 660; sequence AKL.

This sequence belongs to the acyl-CoA oxidase family. As to quaternary structure, forms a heterodimer with acox-1.1; the interaction may be important for the stability of acox-1.3. FAD is required as a cofactor.

It is found in the peroxisome. The enzyme catalyses asc-C7-CoA + O2 = asc-DeltaC7-CoA + H2O2. It participates in lipid metabolism; peroxisomal fatty acid beta-oxidation. Its activity is regulated as follows. Activated by ATP. ATP binding leads to a conformational change that promotes FAD cofactor binding and enzyme activity. ATP binding likely occurs during acox-1.3 folding and/or dimer formation. Involved in the first step of peroxisomal beta-oxidation by catalyzing the desaturation of fatty acid-derived side chains of ascaroside pheromones, which regulates development and behavior. Specifically, shortens ascarosides with a 7-carbon side chain (asc-C7). Does not catalyze the desaturation of fatty acids or hydroxylated fatty acids. Involved in the biosynthesis of asc-C6-MK (daumone 2) and asc-delta-C9 (daumone 3) but not asc-C7 (daumone 1); daumones are pheromones produced during unfavourable growth conditions which promote entry into the dauer stage. This Caenorhabditis elegans protein is Acyl-coenzyme A oxidase acox-1.3.